A 268-amino-acid polypeptide reads, in one-letter code: Tryptophan synthase alpha chain (268 aa).

Residues E49 and D60 each act as proton acceptor in the active site.

This sequence belongs to the TrpA family. In terms of assembly, tetramer of two alpha and two beta chains.

The enzyme catalyses (1S,2R)-1-C-(indol-3-yl)glycerol 3-phosphate + L-serine = D-glyceraldehyde 3-phosphate + L-tryptophan + H2O. It participates in amino-acid biosynthesis; L-tryptophan biosynthesis; L-tryptophan from chorismate: step 5/5. In terms of biological role, the alpha subunit is responsible for the aldol cleavage of indoleglycerol phosphate to indole and glyceraldehyde 3-phosphate. The polypeptide is Tryptophan synthase alpha chain (Escherichia coli O157:H7).